Consider the following 389-residue polypeptide: Succinate--CoA ligase [ADP-forming] subunit beta (389 aa).

The ATP-grasp domain maps to 9-246 (KEILRRHNAN…ITEEDPYEVK (238 aa)). ATP contacts are provided by residues Lys48, 55-57 (GRG), Glu101, Leu104, and Glu109. Residues Asn201 and Asp215 each coordinate Mg(2+). Substrate is bound by residues Asn266 and 323 to 325 (GIV).

The protein belongs to the succinate/malate CoA ligase beta subunit family. As to quaternary structure, heterotetramer of two alpha and two beta subunits. Requires Mg(2+) as cofactor.

It carries out the reaction succinate + ATP + CoA = succinyl-CoA + ADP + phosphate. It catalyses the reaction GTP + succinate + CoA = succinyl-CoA + GDP + phosphate. It participates in carbohydrate metabolism; tricarboxylic acid cycle; succinate from succinyl-CoA (ligase route): step 1/1. Succinyl-CoA synthetase functions in the citric acid cycle (TCA), coupling the hydrolysis of succinyl-CoA to the synthesis of either ATP or GTP and thus represents the only step of substrate-level phosphorylation in the TCA. The beta subunit provides nucleotide specificity of the enzyme and binds the substrate succinate, while the binding sites for coenzyme A and phosphate are found in the alpha subunit. The sequence is that of Succinate--CoA ligase [ADP-forming] subunit beta from Leptospira biflexa serovar Patoc (strain Patoc 1 / Ames).